The following is a 362-amino-acid chain: Peptide chain release factor 1 (362 aa).

Q237 is modified (N5-methylglutamine).

It belongs to the prokaryotic/mitochondrial release factor family. Methylated by PrmC. Methylation increases the termination efficiency of RF1.

The protein localises to the cytoplasm. Peptide chain release factor 1 directs the termination of translation in response to the peptide chain termination codons UAG and UAA. The chain is Peptide chain release factor 1 from Vibrio atlanticus (strain LGP32) (Vibrio splendidus (strain Mel32)).